Consider the following 218-residue polypeptide: Small ribosomal subunit protein uS3c (218 aa).

In terms of domain architecture, KH type-2 spans 47–118; it reads VQKHMRISSG…RLNIAIARVA (72 aa).

It belongs to the universal ribosomal protein uS3 family. As to quaternary structure, part of the 30S ribosomal subunit.

It is found in the plastid. It localises to the chloroplast. In Nymphaea alba (White water-lily), this protein is Small ribosomal subunit protein uS3c (rps3).